Consider the following 309-residue polypeptide: D-galacturonate reductase (309 aa).

The active-site Proton donor is Tyr50. His109 contacts substrate. Position 210–264 (210–264 (SPLGSTGSPLMSADPVVKIAEKKGISPTTVLLSYHVNRGSTVLAKSVTPARIKAN)) interacts with NADP(+).

This sequence belongs to the aldo/keto reductase family.

It catalyses the reaction L-galactonate + NADP(+) = aldehydo-D-galacturonate + NADPH + H(+). It functions in the pathway carbohydrate acid metabolism. Mediates the reduction of D-galacturonate to L-galactonate, the first step in D-galacturonate catabolic process. Also has activity with D-glucuronate and DL-glyceraldehyde. No activity is observed with D-glucose, D-fructose, D-xylose, D-galactose, L-arabinose or D-mannose. Activity is seen only with NADPH and not with NADH. The sequence is that of D-galacturonate reductase (gar1) from Hypocrea jecorina (Trichoderma reesei).